A 122-amino-acid chain; its full sequence is Large ribosomal subunit protein uL14c (122 aa).

It belongs to the universal ribosomal protein uL14 family. In terms of assembly, part of the 50S ribosomal subunit.

It localises to the plastid. It is found in the chloroplast. Binds to 23S rRNA. The chain is Large ribosomal subunit protein uL14c from Lemna minor (Common duckweed).